The chain runs to 362 residues: Protein RecA (362 aa).

Residue 77-84 (GPESSGKT) participates in ATP binding.

Belongs to the RecA family.

The protein resides in the cytoplasm. Its function is as follows. Can catalyze the hydrolysis of ATP in the presence of single-stranded DNA, the ATP-dependent uptake of single-stranded DNA by duplex DNA, and the ATP-dependent hybridization of homologous single-stranded DNAs. It interacts with LexA causing its activation and leading to its autocatalytic cleavage. The polypeptide is Protein RecA (Nitrobacter winogradskyi (strain ATCC 25391 / DSM 10237 / CIP 104748 / NCIMB 11846 / Nb-255)).